A 573-amino-acid polypeptide reads, in one-letter code: Patellin-1 (573 aa).

2 disordered regions span residues 1-74 (MAQE…SVKE) and 111-202 (REFT…DGTK). Position 2 is an N-acetylalanine (Ala-2). Residues 18–28 (VKEKPITDKEV) are compositionally biased toward basic and acidic residues. Position 29 is a phosphothreonine (Thr-29). Residues 35 to 74 (AEKEEVAAPVSDEKAVPEKEVTPEKEAPAAEAEKSVSVKE) are compositionally biased toward basic and acidic residues. Residues 89 to 157 (AEEVQKKALE…TTEVKVEEEK (69 aa)) adopt a coiled-coil conformation. A Phosphothreonine modification is found at Thr-118. Composition is skewed to basic and acidic residues over residues 120–169 (VKEE…EKSS) and 176–190 (TKSE…EVTT). Ser-195 is subject to Phosphoserine. A Glycyl lysine isopeptide (Lys-Gly) (interchain with G-Cter in ubiquitin) cross-link involves residue Lys-285. Positions 295–468 (SGEEVSEFEK…KYGGLSKDTP (174 aa)) constitute a CRAL-TRIO domain. The 102-residue stretch at 471 to 572 (EETITEAIVK…KKKVLYRFKT (102 aa)) folds into the GOLD domain.

Belongs to the patellin family. Interacts with the deubiquitinating enzyme AMSH3. In terms of tissue distribution, expressed ubiquitously with higher levels in expanding roots and leaves (at protein level).

It is found in the membrane. Its subcellular location is the cytoplasm. Functionally, carrier protein that may be involved in membrane-trafficking events associated with cell plate formation during cytokinesis. Binds to some hydrophobic molecules and promotes their transfer between the different cellular sites. Binds to phosphoinositides with a preference for PtdIns(5)P, PtdIns(4,5)P2 and PtdIns(3)P. The sequence is that of Patellin-1 (PATL1) from Arabidopsis thaliana (Mouse-ear cress).